The chain runs to 316 residues: Ribosomal RNA small subunit methyltransferase H (316 aa).

S-adenosyl-L-methionine is bound by residues 35 to 37 (AGH), D55, F84, D105, and Q112.

This sequence belongs to the methyltransferase superfamily. RsmH family.

The protein resides in the cytoplasm. It catalyses the reaction cytidine(1402) in 16S rRNA + S-adenosyl-L-methionine = N(4)-methylcytidine(1402) in 16S rRNA + S-adenosyl-L-homocysteine + H(+). In terms of biological role, specifically methylates the N4 position of cytidine in position 1402 (C1402) of 16S rRNA. This Streptococcus pneumoniae (strain 70585) protein is Ribosomal RNA small subunit methyltransferase H.